The following is a 370-amino-acid chain: MPARPIPVPLLALALAAALAVPSPAAAARVKELADVVGVRENALYGYGLVVGLAGTGDSERVLFTQQSVAGMLGRLGIRIDPKDVRARNVAAVMVTARLPPFARPGTRIDVAVASMGNARSLAGGLLLVTPLAGGDGKVYAVGQGPVQVAGYDAGAGGAELRKNTPTSGRVAGGAAVERAVDFALGQAPLVLALRRPDLTTASRLAAAVNAKLGAGTARAVDPAAVELSPPAARKDDVVGFLAEIELLEVEADQRARVVVSERTGTVVAGEGVRLRPVAVAHGGLQVRVQRDPAVSQPAPFGAGRTVEATRDRAAATEAAGGVVALPATASVQDLARALDLLGASPRDLVAVLEAIRAAGALDAELEVLE.

The first 27 residues, 1–27 (MPARPIPVPLLALALAAALAVPSPAAA), serve as a signal peptide directing secretion.

It belongs to the FlgI family. The basal body constitutes a major portion of the flagellar organelle and consists of four rings (L,P,S, and M) mounted on a central rod.

The protein localises to the periplasm. The protein resides in the bacterial flagellum basal body. In terms of biological role, assembles around the rod to form the L-ring and probably protects the motor/basal body from shearing forces during rotation. This Anaeromyxobacter sp. (strain K) protein is Flagellar P-ring protein.